The sequence spans 383 residues: Arginine biosynthesis bifunctional protein ArgJ 1 (383 aa).

The disordered stretch occupies residues methionine 1–aspartate 25. The substrate site is built by threonine 146, lysine 168, threonine 179, glutamate 259, asparagine 378, and serine 383. The active-site Nucleophile is threonine 179.

The protein belongs to the ArgJ family. Heterotetramer of two alpha and two beta chains.

Its subcellular location is the cytoplasm. The catalysed reaction is N(2)-acetyl-L-ornithine + L-glutamate = N-acetyl-L-glutamate + L-ornithine. The enzyme catalyses L-glutamate + acetyl-CoA = N-acetyl-L-glutamate + CoA + H(+). Its pathway is amino-acid biosynthesis; L-arginine biosynthesis; L-ornithine and N-acetyl-L-glutamate from L-glutamate and N(2)-acetyl-L-ornithine (cyclic): step 1/1. It participates in amino-acid biosynthesis; L-arginine biosynthesis; N(2)-acetyl-L-ornithine from L-glutamate: step 1/4. In terms of biological role, catalyzes two activities which are involved in the cyclic version of arginine biosynthesis: the synthesis of N-acetylglutamate from glutamate and acetyl-CoA as the acetyl donor, and of ornithine by transacetylation between N(2)-acetylornithine and glutamate. The protein is Arginine biosynthesis bifunctional protein ArgJ 1 of Streptomyces clavuligerus.